We begin with the raw amino-acid sequence, 280 residues long: Tumor necrosis factor ligand superfamily member 6 (280 aa).

Residues 1–80 are Cytoplasmic-facing; that stretch reads MQQPFNYPYP…KKRGNHSTGL (80 aa). The segment at 20–70 is disordered; it reads SSPWAPPGTVLPCPTSVPRRPGQRRPPPPPPPPPLPPPPPSPLPPLPLPPL. Over residues 43–69 the composition is skewed to pro residues; the sequence is RRPPPPPPPPPLPPPPPSPLPPLPLPP. Residues 81-101 traverse the membrane as a helical; Signal-anchor for type II membrane protein segment; the sequence is CLLVMFFMVLVALVGLGLGMF. The Extracellular segment spans residues 102 to 280; the sequence is QLFHLQKELA…SQTFFGLYKL (179 aa). The tract at residues 117–155 is disordered; sequence TSQKHTASSLEKQIGHPSPPPEKKEQRKVAHLTGKPNSR. The THD domain maps to 144–280; it reads KVAHLTGKPN…SQTFFGLYKL (137 aa). N-linked (GlcNAc...) asparagine glycosylation is present at N183. A disulfide bridge connects residues C201 and C232. N249 and N259 each carry an N-linked (GlcNAc...) asparagine glycan.

The protein belongs to the tumor necrosis factor family. Homotrimer. Interacts with ARHGAP9, BAIAP2L1, BTK, CACNB3, CACNB4, CRK, DLG2, DNMBP, DOCK4, EPS8L3, FGR, FYB1, FYN, HCK, ITK, ITSN2, KALRN, LYN, MACC1, MIA, MPP4, MYO15A, NCF1, NCK1, NCK2, NCKIPSD, OSTF1, PIK3R1, PSTPIP1, RIMBP3C, SAMSN1, SH3GL3, SH3PXD2B, SH3PXD2A, SH3RF2, SKAP2, SNX33, SNX9, SORBS3, SPTA1, SRC, SRGAP1, SRGAP2, SRGAP3, TEC, TJP3 and YES1. The soluble form derives from the membrane form by proteolytic processing. The membrane-bound form undergoes two successive intramembrane proteolytic cleavages. The first one is processed by ADAM10 producing an N-terminal fragment, which lacks the receptor-binding extracellular domain. This ADAM10-processed FasL (FasL APL) remnant form is still membrane anchored and further processed by SPPL2A that liberates the FasL intracellular domain (FasL ICD). FasL shedding by ADAM10 is a prerequisite for subsequent intramembrane cleavage by SPPL2A in T-cells. Post-translationally, phosphorylated by FGR on tyrosine residues; this is required for ubiquitination and subsequent internalization. In terms of processing, N-glycosylated. Glycosylation enhances apoptotic activity. Monoubiquitinated.

The protein resides in the cell membrane. The protein localises to the cytoplasmic vesicle lumen. It is found in the lysosome lumen. Its subcellular location is the secreted. It localises to the nucleus. Functionally, cytokine that binds to TNFRSF6/FAS, a receptor that transduces the apoptotic signal into cells. Involved in cytotoxic T-cell-mediated apoptosis, natural killer cell-mediated apoptosis and in T-cell development. Initiates fratricidal/suicidal activation-induced cell death (AICD) in antigen-activated T-cells contributing to the termination of immune responses. TNFRSF6/FAS-mediated apoptosis has also a role in the induction of peripheral tolerance. Binds to TNFRSF6B/DcR3, a decoy receptor that blocks apoptosis. Induces FAS-mediated activation of NF-kappa-B, initiating non-apoptotic signaling pathways. Can induce apoptosis but does not appear to be essential for this process. Its function is as follows. Cytoplasmic form induces gene transcription inhibition. The sequence is that of Tumor necrosis factor ligand superfamily member 6 (FASLG) from Macaca fascicularis (Crab-eating macaque).